The primary structure comprises 229 residues: Demethylmenaquinone methyltransferase (229 aa).

S-adenosyl-L-methionine-binding positions include threonine 57, aspartate 77, and 101 to 102 (DV).

This sequence belongs to the class I-like SAM-binding methyltransferase superfamily. MenG/UbiE family.

It catalyses the reaction a 2-demethylmenaquinol + S-adenosyl-L-methionine = a menaquinol + S-adenosyl-L-homocysteine + H(+). It functions in the pathway quinol/quinone metabolism; menaquinone biosynthesis; menaquinol from 1,4-dihydroxy-2-naphthoate: step 2/2. Functionally, methyltransferase required for the conversion of demethylmenaquinol (DMKH2) to menaquinol (MKH2). The sequence is that of Demethylmenaquinone methyltransferase from Chlamydia trachomatis serovar A (strain ATCC VR-571B / DSM 19440 / HAR-13).